The following is a 198-amino-acid chain: Nucleoside triphosphate pyrophosphatase 1 (198 aa).

Catalysis depends on aspartate 75, which acts as the Proton acceptor.

Belongs to the Maf family. A divalent metal cation serves as cofactor.

It localises to the cytoplasm. It catalyses the reaction a ribonucleoside 5'-triphosphate + H2O = a ribonucleoside 5'-phosphate + diphosphate + H(+). The enzyme catalyses a 2'-deoxyribonucleoside 5'-triphosphate + H2O = a 2'-deoxyribonucleoside 5'-phosphate + diphosphate + H(+). In terms of biological role, nucleoside triphosphate pyrophosphatase. May have a dual role in cell division arrest and in preventing the incorporation of modified nucleotides into cellular nucleic acids. The protein is Nucleoside triphosphate pyrophosphatase 1 of Jannaschia sp. (strain CCS1).